The sequence spans 320 residues: Cytochrome f (320 aa).

An N-terminal signal peptide occupies residues 1-35 (MQTRNAFSWIKKEITRSISVLLMIYIITRAPISNA). Heme-binding residues include Tyr-36, Cys-56, Cys-59, and His-60. The helical transmembrane segment at 286–305 (VQGLLLFLASIILAQIFLVL) threads the bilayer.

Belongs to the cytochrome f family. In terms of assembly, the 4 large subunits of the cytochrome b6-f complex are cytochrome b6, subunit IV (17 kDa polypeptide, petD), cytochrome f and the Rieske protein, while the 4 small subunits are PetG, PetL, PetM and PetN. The complex functions as a dimer. Heme is required as a cofactor.

The protein localises to the plastid. It localises to the chloroplast thylakoid membrane. In terms of biological role, component of the cytochrome b6-f complex, which mediates electron transfer between photosystem II (PSII) and photosystem I (PSI), cyclic electron flow around PSI, and state transitions. This is Cytochrome f (petA) from Vicia faba (Broad bean).